A 200-amino-acid polypeptide reads, in one-letter code: Chromophore lyase CpcT/CpeT 2 (200 aa).

Belongs to the CpcT/CpeT biliprotein lyase family.

Its function is as follows. Covalently attaches a chromophore to Cys residue(s) of phycobiliproteins. The protein is Chromophore lyase CpcT/CpeT 2 of Microcystis aeruginosa (strain NIES-843 / IAM M-2473).